A 96-amino-acid chain; its full sequence is Conantokin Rl-C (96 aa).

A signal peptide spans 1 to 21 (MQLYTYLYLLVPLVTFHLILG). The propeptide occupies 22-78 (TGTLDHGDALTERRSADATALKPEPVLLQKSSARSTDDNGKDTQMKRIFKKRRNKAR). Positions 36-85 (SADATALKPEPVLLQKSSARSTDDNGKDTQMKRIFKKRRNKARGEEELSE) are disordered. Basic and acidic residues predominate over residues 56–66 (STDDNGKDTQM). Glu-81 is an a divalent metal cation binding site. 4-carboxyglutamate occurs at positions 81, 82, 85, 89, and 93. Glu-85, Glu-89, and Glu-93 together coordinate a divalent metal cation. Asparagine amide is present on Asn-96.

Belongs to the conotoxin B superfamily. Ca(2+) serves as cofactor. The cofactor is Mg(2+). Expressed by the venom duct.

The protein localises to the secreted. Functionally, conantokins inhibit N-methyl-D-aspartate (NMDA) receptors. This toxin has antagonist activity on NR2B/GRIN2B (IC(50)=1.4 uM) and NR2A/GRIN2A (IC(50)=2.9 uM) subunits, when tested on rat receptors. The protein is Conantokin Rl-C of Conus rolani (Cone snail).